The chain runs to 221 residues: Max dimerization protein 1 (221 aa).

The short motif at 21–49 is the Nuclear localization signal element; that stretch reads RREREAEHGYASMLPYNSKERDGLKRKSK. Disordered stretches follow at residues 28–67 and 176–202; these read HGYA…EKNR and DWSS…DEGY. Residues 55-107 enclose the bHLH domain; sequence NSRSTHNEMEKNRRAHLRLCLEKLKILVPLGPESNRHTTLSLLTRAKSHIKKL. Polar residues predominate over residues 192–202; the sequence is SMQSICSDEGY.

Efficient DNA binding requires dimerization with another bHLH protein. Binds DNA as a heterodimer with MAX.

The protein resides in the nucleus. In terms of biological role, transcriptional repressor. MAD binds with MAX to form a sequence-specific DNA-binding protein complex which recognizes the core sequence 5'-CAC[GA]TG-3'. MAD thus antagonizes MYC transcriptional activity by competing for MAX. The chain is Max dimerization protein 1 (mxd1) from Xenopus tropicalis (Western clawed frog).